We begin with the raw amino-acid sequence, 664 residues long: NAD(P)H-quinone oxidoreductase chain 5 (664 aa).

The next 16 helical transmembrane spans lie at 7-27 (YAWL…IGLI), 39-59 (LNAV…FGLL), 91-111 (HLSA…MIYT), 120-140 (GYVR…GLVF), 144-164 (LVQV…LIGF), 187-207 (FGLL…EFDL), 219-239 (GQIS…GPVA), 258-278 (TPIS…FLVA), 290-310 (AMNV…TIAL), 327-347 (LGYM…FHLM), 352-372 (FKAM…EVVG), 395-415 (ATTF…AGFW), 420-440 (ILGL…ATAG), 495-515 (FPLM…VPWG), 541-561 (FLIM…IASL), and 643-663 (VQFY…FFSV).

The protein belongs to the complex I subunit 5 family.

The protein localises to the cell membrane. It catalyses the reaction a plastoquinone + NADH + (n+1) H(+)(in) = a plastoquinol + NAD(+) + n H(+)(out). It carries out the reaction a plastoquinone + NADPH + (n+1) H(+)(in) = a plastoquinol + NADP(+) + n H(+)(out). NDH-1 shuttles electrons from NAD(P)H, via FMN and iron-sulfur (Fe-S) centers, to quinones in the respiratory chain. The immediate electron acceptor for the enzyme in this species is believed to be plastoquinone. Couples the redox reaction to proton translocation (for every two electrons transferred, four hydrogen ions are translocated across the cytoplasmic membrane), and thus conserves the redox energy in a proton gradient. The protein is NAD(P)H-quinone oxidoreductase chain 5 (ndhF) of Picosynechococcus sp. (strain ATCC 27264 / PCC 7002 / PR-6) (Agmenellum quadruplicatum).